The sequence spans 286 residues: 2-hydroxy-6-oxo-6-phenylhexa-2,4-dienoate hydrolase (286 aa).

Residues 42-43, asparagine 51, asparagine 111, threonine 180, and arginine 190 each bind substrate; that span reads GG. Histidine 265 serves as the catalytic Proton acceptor. A substrate-binding site is contributed by tryptophan 266.

It belongs to the AB hydrolase superfamily. BphD family. As to quaternary structure, homodimer.

The enzyme catalyses 2,6-dioxo-6-phenylhexa-3-enoate + H2O = 2-oxopent-4-enoate + benzoate + H(+). It participates in xenobiotic degradation; biphenyl degradation; 2-hydroxy-2,4-pentadienoate and benzoate from biphenyl: step 4/4. Its function is as follows. Catalyzes an unusual C-C bond hydrolysis of 2-hydroxy-6-oxo-6-phenylhexa-2,4-dienoic acid (HOPDA) to produce benzoic acid and 2-hydroxy-2,4-pentadienoic acid (HPD). This chain is 2-hydroxy-6-oxo-6-phenylhexa-2,4-dienoate hydrolase, found in Comamonas testosteroni (Pseudomonas testosteroni).